The chain runs to 389 residues: Glutaryl-CoA dehydrogenase (389 aa).

R87 and N91 together coordinate substrate. Residues 126 to 129 (FGIT), S135, and 159 to 161 (WIS) each bind FAD. S135 lines the substrate pocket. Position 181 (S181) interacts with substrate. Residues R271, 281–284 (FQMN), R340, A344, and 367–371 (EGSAN) contribute to the FAD site. E367 acts as the Proton acceptor in catalysis. R385 serves as a coordination point for substrate.

This sequence belongs to the acyl-CoA dehydrogenase family. Homotetramer. Requires FAD as cofactor.

The catalysed reaction is glutaryl-CoA + A = (2E)-glutaconyl-CoA + AH2. It participates in aromatic compound metabolism; benzoyl-CoA degradation. With respect to regulation, inhibited by glutaconyl-CoA. Its function is as follows. Catalyzes the dehydrogenation of Glutaryl-CoA to glutaconyl-CoA. This is Glutaryl-CoA dehydrogenase (Acd) from Desulfococcus multivorans.